Consider the following 685-residue polypeptide: Protein snwA (685 aa).

4 disordered regions span residues 1-62 (MTSL…GYLP), 88-112 (RKGKSKSSNSNTSNMNGGGTTTSIV), 347-573 (LAED…DSIY), and 605-685 (AVSN…SKKR). 2 stretches are compositionally biased toward low complexity: residues 30–41 (PQQQKQQQQQQQ) and 93–102 (KSSNSNTSNM). The SNW stretch occupies residues 194–360 (ATYIKYTPSN…VRNERSGIIQ (167 aa)). Positions 370 to 381 (DSDNDNDNDSSS) are enriched in acidic residues. The span at 399–494 (RSTERIPSRN…DRYSKRRSDS (96 aa)) shows a compositional bias: basic and acidic residues. Residues 495 to 507 (DSDSDSDSSDSED) are compositionally biased toward acidic residues. The span at 508–556 (ERVRRERKEKLERDKIRMEKKRELEREYRLEASGKKSKFNRDQDRDISE) shows a compositional bias: basic and acidic residues. Over residues 618–631 (EDNTSIQDVLSNSR) the composition is skewed to polar residues. Positions 646-685 (PNKEFSGTDRSKDRTGPVAFEKEKKKSDDPFGFDDFSKKR) are enriched in basic and acidic residues.

Belongs to the SNW family. As to quaternary structure, interacts with cypE.

The protein localises to the nucleus. The sequence is that of Protein snwA (snwA) from Dictyostelium discoideum (Social amoeba).